We begin with the raw amino-acid sequence, 188 residues long: Elongation factor P (188 aa).

The residue at position 34 (lysine 34) is an N6-(3,6-diaminohexanoyl)-5-hydroxylysine.

This sequence belongs to the elongation factor P family. In terms of processing, may be beta-lysylated on the epsilon-amino group of Lys-34 by the combined action of EpmA and EpmB, and then hydroxylated on the C5 position of the same residue by EpmC (if this protein is present). Lysylation is critical for the stimulatory effect of EF-P on peptide-bond formation. The lysylation moiety may extend toward the peptidyltransferase center and stabilize the terminal 3-CCA end of the tRNA. Hydroxylation of the C5 position on Lys-34 may allow additional potential stabilizing hydrogen-bond interactions with the P-tRNA.

It localises to the cytoplasm. The protein operates within protein biosynthesis; polypeptide chain elongation. Its function is as follows. Involved in peptide bond synthesis. Alleviates ribosome stalling that occurs when 3 or more consecutive Pro residues or the sequence PPG is present in a protein, possibly by augmenting the peptidyl transferase activity of the ribosome. Modification of Lys-34 is required for alleviation. The polypeptide is Elongation factor P (Serratia proteamaculans (strain 568)).